Consider the following 339-residue polypeptide: MKIVIDLMGADHGVLPIIEGVSRALENKSFSAVLVGDKDKATPFISKELASKVEMIHTQDYIKMEEVATEAIKRKESSIYLGMDILKNGADALISAGHSGATMGLATLRLGRIKGVERPAICTLMPSVGKRPSVLLDAGANTDCKPEYLIDFALMGYEYAKSVLHYDSPKVGLLSNGEEDIKGNMLVKETHKMLKAYDFFYGNVEGSDIFKGVVDVVVCDGFMGNVVLKTTEGVASAIGSIFKDEIKSSFKSKMGALMLKNAFDILKQKTDYAEYGGAPLLGVNKSVIISHGKSNARAIECAIYQAISAVESQVCLRITKAFESLKPSVSVPQSDQQDA.

It belongs to the PlsX family. Homodimer. Probably interacts with PlsY.

The protein resides in the cytoplasm. The enzyme catalyses a fatty acyl-[ACP] + phosphate = an acyl phosphate + holo-[ACP]. Its pathway is lipid metabolism; phospholipid metabolism. Functionally, catalyzes the reversible formation of acyl-phosphate (acyl-PO(4)) from acyl-[acyl-carrier-protein] (acyl-ACP). This enzyme utilizes acyl-ACP as fatty acyl donor, but not acyl-CoA. In Helicobacter pylori (strain Shi470), this protein is Phosphate acyltransferase.